We begin with the raw amino-acid sequence, 107 residues long: Insulin (107 aa).

The N-terminal stretch at 1–24 (MALWIRSLPLLALLVFSGPGTSYA) is a signal peptide. Intrachain disulfides connect C31–C93, C43–C106, and C92–C97. A propeptide spans 57 to 84 (DVEQPLVSSPLRGEAGVLPFQQEEYEKV) (c peptide).

Belongs to the insulin family. As to quaternary structure, heterodimer of a B chain and an A chain linked by two disulfide bonds.

The protein resides in the secreted. Its function is as follows. Insulin decreases blood glucose concentration. It increases cell permeability to monosaccharides, amino acids and fatty acids. It accelerates glycolysis, the pentose phosphate cycle, and glycogen synthesis in liver. In Gallus gallus (Chicken), this protein is Insulin (INS).